We begin with the raw amino-acid sequence, 386 residues long: Demethylsterigmatocystin 6-O-methyltransferase (386 aa).

137–150 contacts substrate; it reads FDISGPCTQILPDF. The substrate binding stretch occupies residues 177-197; that stretch reads MFEWMPQHPKHMESLGHLMAL. S-adenosyl-L-methionine contacts are provided by residues 228 to 229, Asp253, 273 to 274, and Arg289; these read GG and NF. The active-site Proton acceptor is the His293.

It belongs to the class I-like SAM-binding methyltransferase superfamily. Cation-independent O-methyltransferase family. COMT subfamily.

It catalyses the reaction 6-demethylsterigmatocystin + S-adenosyl-L-methionine = sterigmatocystin + S-adenosyl-L-homocysteine + H(+). Its pathway is mycotoxin biosynthesis; aflatoxin biosynthesis. Functionally, demethylsterigmatocystin 6-O-methyltransferase; part of the gene cluster that mediates the biosynthesis of aflatoxins, a group of polyketide-derived furanocoumarins, and part of the most toxic and carcinogenic compounds among the known mycotoxins. The four major aflatoxins produced by A.parasiticus are aflatoxin B1 (AFB1), aflatoxin B2 (AFB2), aflatoxin G1 (AFG1) and aflatoxin G2 (AFG2). Within the aflatoxin pathway, the methyltransferase aflO then catalyzes the modification of demethylsterigmatocystin (DMST) to sterigmatocystin (ST), and of dihydrodemethylsterigmatocystin (DMDHST) to dihydrosterigmatocystin (DHST). The biosynthesis of aflatoxins begins with the norsolorinic acid synthase aflC that combines a hexanoyl starter unit produced by the fatty acid synthase aflA/aflB and 7 malonyl-CoA extender units to synthesize the precursor NOR. The second step is the conversion of NOR to averantin and requires the norsolorinic acid ketoreductase aflD, which catalyzes the dehydration of norsolorinic acid to form (1'S)-averantin. The norsolorinic acid reductases aflE and aflF may also play a role in the conversion of NOR to AVN. The cytochrome P450 monooxygenase aflG then catalyzes the hydroxylation of AVN to 5'hydroxyaverantin (HAVN). The next step is performed by the 5'-hydroxyaverantin dehydrogenase aflH that transforms HAVN to 5'-oxoaverantin (OAVN) which is further converted to averufin (AVF) by aflK that plays a dual role in the pathway, as a 5'-oxoaverantin cyclase that mediates conversion of 5'-oxoaverantin, as well as a versicolorin B synthase in a later step in the pathway. The averufin oxidase aflI catalyzes the conversion of AVF to versiconal hemiacetal acetate (VHA). VHA is then the substrate for the versiconal hemiacetal acetate esterase aflJ to yield versiconal (VAL). Versicolorin B synthase aflK then converts VAL to versicolorin B (VERB) by closing the bisfuran ring of aflatoxin which is required for DNA-binding, thus giving to aflatoxin its activity as a mutagen. Then, the activity of the versicolorin B desaturase aflL leads to versicolorin A (VERA). A branch point starts from VERB since it can also be converted to dihydrodemethylsterigmatocystin (DMDHST), probably also by aflL, VERA being a precursor for aflatoxins B1 and G1, and DMDHST for aflatoxins B2 and G2. Next, the versicolorin reductase aflM and the cytochrome P450 monooxygenase aflN are involved in conversion of VERA to demethylsterigmatocystin (DMST). AflX and aflY seem also involved in this step, through probable aflX-mediated epoxide ring-opening step following versicolorin A oxidation and aflY-mediated Baeyer-Villiger oxidation required for the formation of the xanthone ring. The methyltransferase aflO then leads to the modification of DMST to sterigmatocystin (ST), and of DMDHST to dihydrosterigmatocystin (DHST). Both ST and DHST are then substrates of the O-methyltransferase aflP to yield O-methylsterigmatocystin (OMST) and dihydro-O-methylsterigmatocystin (DHOMST), respectively. Finally OMST is converted to aflatoxins B1 and G1, and DHOMST to aflatoxins B2 and G2, via the action of several enzymes including O-methylsterigmatocystin oxidoreductase aflQ, the cytochrome P450 monooxygenase aflU, but also the NADH-dependent flavin oxidoreductase nadA which is specifically required for the synthesis of AFG1. This chain is Demethylsterigmatocystin 6-O-methyltransferase, found in Aspergillus parasiticus (strain ATCC 56775 / NRRL 5862 / SRRC 143 / SU-1).